Reading from the N-terminus, the 219-residue chain is Elongation factor Ts, chloroplastic (219 aa).

Belongs to the EF-Ts family.

Its subcellular location is the plastid. The protein localises to the chloroplast. In terms of biological role, associates with the EF-Tu.GDP complex and induces the exchange of GDP to GTP. It remains bound to the aminoacyl-tRNA.EF-Tu.GTP complex up to the GTP hydrolysis stage on the ribosome. The chain is Elongation factor Ts, chloroplastic (tsf) from Rhodomonas salina (Cryptomonas salina).